Consider the following 356-residue polypeptide: Tyrosine recombinase XerS (356 aa).

The Core-binding (CB) domain maps to 16 to 121; the sequence is IMPSYVLEYY…ALSSLYKYLT (106 aa). The region spanning 169-354 is the Tyr recombinase domain; sequence GFLDYIDNEY…INEEQKNALD (186 aa). Active-site residues include Arg210, Lys234, His306, Arg309, and His332. Catalysis depends on Tyr341, which acts as the O-(3'-phospho-DNA)-tyrosine intermediate.

This sequence belongs to the 'phage' integrase family. XerS subfamily.

The protein resides in the cytoplasm. With respect to regulation, ftsK is required for recombination. In terms of biological role, site-specific tyrosine recombinase, which acts by catalyzing the cutting and rejoining of the recombining DNA molecules. Essential to convert dimers of the bacterial chromosome into monomers to permit their segregation at cell division. The polypeptide is Tyrosine recombinase XerS (Lactococcus lactis subsp. lactis (strain IL1403) (Streptococcus lactis)).